The chain runs to 432 residues: Non-peptidase homolog YmxG (432 aa).

The first 20 residues, 1 to 20 (MKKFLITLLLGVFMGLQASA), serve as a signal peptide directing secretion.

The protein belongs to the peptidase M16 family.

Its subcellular location is the secreted. May contribute to the full activity of the protease PqqE. This Helicobacter pylori (strain ATCC 700392 / 26695) (Campylobacter pylori) protein is Non-peptidase homolog YmxG.